The following is a 228-amino-acid chain: 2,3-bisphosphoglycerate-dependent phosphoglycerate mutase (228 aa).

Substrate-binding positions include R8–N15, T21–G22, R60, E87–Y90, K98, R114–R115, and G180–N181. Catalysis depends on H9, which acts as the Tele-phosphohistidine intermediate. The Proton donor/acceptor role is filled by E87.

Belongs to the phosphoglycerate mutase family. BPG-dependent PGAM subfamily. Homodimer.

It carries out the reaction (2R)-2-phosphoglycerate = (2R)-3-phosphoglycerate. It participates in carbohydrate degradation; glycolysis; pyruvate from D-glyceraldehyde 3-phosphate: step 3/5. In terms of biological role, catalyzes the interconversion of 2-phosphoglycerate and 3-phosphoglycerate. In Novosphingobium aromaticivorans (strain ATCC 700278 / DSM 12444 / CCUG 56034 / CIP 105152 / NBRC 16084 / F199), this protein is 2,3-bisphosphoglycerate-dependent phosphoglycerate mutase.